Here is a 309-residue protein sequence, read N- to C-terminus: Elongator complex protein 5 (309 aa).

Phosphoserine is present on residues Ser-3 and Ser-4.

It belongs to the ELP5 family. In terms of assembly, component of the elongator complex, which consists of ELP1/IKI3, ELP2, ELP3, ELP4, ELP5/IKI1 and ELP6. The elongator complex is composed of two copies of the Elp123 subcomplex (composed of ELP1/IKI3, ELP2 and ELP3) and two copies of the Elp456 subcomplex (composed of ELP4, ELP5/IKI1 and ELP6). The Elp123 subcomplex forms a two-lobed scaffold, which binds the Elp456 subcomplex asymmetrically. In each lobe, ELP2 is tightly sandwiched between ELP1/IKI3 and ELP3. The Elp123 subcomplex binds tRNA through ELP1/IKI3 and ELP3 and can bind 2 tRNAs simultaneously. tRNA-binding by the Elp123 subcomplex induces conformational rearrangements which precisely position the targeted anticodon base in the active site. The Elp456 subcomplex binds tRNA and has ATPase activity. Interacts with KTI11/DPH3.

The protein resides in the cytoplasm. Its subcellular location is the nucleus. The protein operates within tRNA modification; 5-methoxycarbonylmethyl-2-thiouridine-tRNA biosynthesis. Functionally, component of the elongator complex which is required for multiple tRNA modifications, including mcm5U (5-methoxycarbonylmethyl uridine), mcm5s2U (5-methoxycarbonylmethyl-2-thiouridine), and ncm5U (5-carbamoylmethyl uridine). The elongator complex catalyzes formation of carboxymethyluridine in the wobble base at position 34 in tRNAs. It functions as a gamma-toxin target (TOT); disruption of the complex confers resistance to Kluyveromyces lactis toxin zymocin (pGKL1 killer toxin). May also be involved in sensitivity to Pichia inositovora toxin. This Saccharomyces cerevisiae (strain ATCC 204508 / S288c) (Baker's yeast) protein is Elongator complex protein 5 (IKI1).